Here is a 125-residue protein sequence, read N- to C-terminus: Large ribosomal subunit protein eL8 (125 aa).

This sequence belongs to the eukaryotic ribosomal protein eL8 family. Part of the 50S ribosomal subunit. Probably part of the RNase P complex.

The protein localises to the cytoplasm. In terms of biological role, multifunctional RNA-binding protein that recognizes the K-turn motif in ribosomal RNA, the RNA component of RNase P, box H/ACA, box C/D and box C'/D' sRNAs. This Nanoarchaeum equitans (strain Kin4-M) protein is Large ribosomal subunit protein eL8.